The following is a 136-amino-acid chain: Magnetite biomineralization protein Mms6 (136 aa).

Residues 1 to 85 (MGEMEREGAT…AVGGTIWSGK (85 aa)) lie on the Cytoplasmic side of the membrane. The tract at residues 86-95 (GLALGLGMGL) is GL repeat. Residues 86 to 106 (GLALGLGMGLGAWGPLILGVV) traverse the membrane as a helical segment. The Lumenal portion of the chain corresponds to 107–136 (GAGAVYAYMKSRDIEAAQSDEEVELRDALS). The MIC, self-assembles, binds magnetite, Fe(2+) and Fe(3+) stretch occupies residues 115 to 136 (MKSRDIEAAQSDEEVELRDALS).

Belongs to the magnetosome Mms6 family. In terms of assembly, full length protein oligomerizes and interacts with MamA. In terms of processing, may undergo cleavage.

It localises to the magnetosome membrane. Promotes the formation of magnetite in Fe(2+)-rich conditions, when magnetite is not readily formed. Binds both Fe(2+) and Fe(3+). May help control the production of crystals with a specific morphology. May function with MamX, MamY amd MamZ in biomineralization. The 4 genes of this operon collectively influence magnetosome size and number. In Magnetospirillum gryphiswaldense (strain DSM 6361 / JCM 21280 / NBRC 15271 / MSR-1), this protein is Magnetite biomineralization protein Mms6.